The sequence spans 315 residues: Kinetochore protein SPC25 homolog (315 aa).

N-acetylmethionine is present on M1. A coiled-coil region spans residues 57–91; sequence TAQSQVELMNLKADLREAEDELVKVLAVKTRKEAR. Residues 261–315 form a disordered region; that stretch reads APAISFSTDTNMSTPENKRSKVQVNRRQKRGSESPLLAPVSTSATRRSSRFKGKK. Residues 266–275 are compositionally biased toward polar residues; that stretch reads FSTDTNMSTP. The span at 280 to 289 shows a compositional bias: basic residues; it reads SKVQVNRRQK.

This sequence belongs to the SPC25 family. Component of the NDC80 complex, which consists of NDC80, NUF2, SPC24 and SPC25.

It localises to the chromosome. It is found in the centromere. In terms of biological role, acts as a component of the essential kinetochore-associated NDC80 complex, which is required for chromosome segregation and spindle checkpoint activity to ensure proper cell division. This is Kinetochore protein SPC25 homolog from Arabidopsis thaliana (Mouse-ear cress).